The sequence spans 881 residues: Mechanosensitive ion channel protein 4 (881 aa).

A disordered region spans residues Phe-35–Asp-245. Residues Phe-56–Glu-66 are compositionally biased toward basic and acidic residues. Polar residues-rich tracts occupy residues Leu-73–Lys-82, Gln-100–Pro-118, and Thr-206–Gly-230. Positions Leu-234–Asp-245 are enriched in acidic residues. Transmembrane regions (helical) follow at residues Ile-255–Cys-275, Val-297–Val-317, Lys-339–Asp-359, and Val-377–Val-397. The segment at Gly-457–Ile-501 is disordered. The segment covering Ser-463–Pro-478 has biased composition (polar residues). Residues Ser-492–Ile-501 show a composition bias toward basic and acidic residues. 2 consecutive transmembrane segments (helical) span residues Ile-643–Ala-663 and Val-678–Val-698.

The protein belongs to the MscS (TC 1.A.23) family.

Its subcellular location is the membrane. In terms of biological role, mechanosensitive channel that opens in response to stretch forces in the membrane lipid bilayer. This is Mechanosensitive ion channel protein 4 (MSL4) from Arabidopsis thaliana (Mouse-ear cress).